The following is a 491-amino-acid chain: Glutathione synthetase GSH2 (491 aa).

Arg128 contributes to the substrate binding site. Glu146 lines the ATP pocket. Mg(2+) contacts are provided by Glu146 and Asn148. Residues 150–153 (VSVS), 228–230 (ERN), Gln234, and 285–288 (RTGY) contribute to the substrate site. ATP contacts are provided by residues Lys324, 382–391 (KPQREGGGNN), Tyr393, 415–418 (MELI), and Glu442. Glu386 serves as a coordination point for Mg(2+). Arg467 is a binding site for substrate. Residues Lys469 and Glu475 each contribute to the ATP site. A substrate-binding site is contributed by 478-479 (VA).

It belongs to the eukaryotic GSH synthase family. As to quaternary structure, homodimer. The cofactor is Mg(2+).

The catalysed reaction is gamma-L-glutamyl-L-cysteine + glycine + ATP = glutathione + ADP + phosphate + H(+). It participates in sulfur metabolism; glutathione biosynthesis; glutathione from L-cysteine and L-glutamate: step 2/2. The chain is Glutathione synthetase GSH2 (GSH2) from Saccharomyces cerevisiae (strain ATCC 204508 / S288c) (Baker's yeast).